Consider the following 478-residue polypeptide: Zinc metalloproteinase/disintegrin ussurin (478 aa).

The N-terminal stretch at 1–20 is a signal peptide; sequence MIQVLLVTICLAAFPYQGSS. A propeptide spanning residues 21 to 190 is cleaved from the precursor; it reads IILESGNVND…KKASPLVVTT (170 aa). The region spanning 193–389 is the Peptidase M12B domain; the sequence is RYVELVVVAD…RNPQCILNKP (197 aa). The Ca(2+) site is built by glutamate 196 and aspartate 280. 3 cysteine pairs are disulfide-bonded: cysteine 304–cysteine 384, cysteine 344–cysteine 368, and cysteine 346–cysteine 351. Position 329 (histidine 329) interacts with Zn(2+). The active site involves glutamate 330. Zn(2+) contacts are provided by histidine 333 and histidine 339. Ca(2+)-binding residues include cysteine 384 and asparagine 387. A propeptide spanning residues 390–413 is cleaved from the precursor; sequence LRTDIVSTPVSGNELLEAGEECDC. The Disintegrin domain occupies 397 to 478; it reads TPVSGNELLE…AGCPRNPFHA (82 aa). Cystine bridges form between cysteine 411–cysteine 426, cysteine 413–cysteine 421, cysteine 420–cysteine 443, cysteine 434–cysteine 440, cysteine 439–cysteine 464, and cysteine 452–cysteine 471. A Cell attachment site motif is present at residues 456–458; it reads RGD.

Belongs to the venom metalloproteinase (M12B) family. P-II subfamily. P-IIa sub-subfamily. As to quaternary structure, monomer. Zn(2+) is required as a cofactor. In terms of tissue distribution, expressed by the venom gland.

It localises to the secreted. Impairs hemostasis in the envenomed animal. Functionally, inhibits platelet aggregation induced by ADP, thrombin, platelet-activating factor and collagen. Acts by inhibiting fibrinogen interaction with platelet receptors GPIIb/GPIIIa (ITGA2B/ITGB3). In Gloydius ussuriensis (Ussuri mamushi), this protein is Zinc metalloproteinase/disintegrin ussurin.